A 248-amino-acid polypeptide reads, in one-letter code: MNVRDLSFKLNSIFDINKYEHIDKNLNGLQVGNINAKVNKVAFAVDASFSTLKEAKGNDFLITHHGIFWSKKERIVSNMYDKTKFLIENNLALYSVHLPMDAHSVYSHSKVFSDFLGLKNSFAFANYGGVNLGIIADSVFSFSEILEKIKKENKHILFSKKFKESVNKVAIVSGSGYSFFEEALCHDVDLFITGDTSHQIYSLAEEFGVNLIFAGHYFTETFGLIKLMEDFKIQEDLEVKFICKNTNL.

A divalent metal cation contacts are provided by His-64, His-65, Asp-101, His-216, and Glu-220.

The protein belongs to the GTP cyclohydrolase I type 2/NIF3 family. As to quaternary structure, homohexamer.

This Borreliella burgdorferi (strain ATCC 35210 / DSM 4680 / CIP 102532 / B31) (Borrelia burgdorferi) protein is GTP cyclohydrolase 1 type 2 homolog.